The sequence spans 98 residues: MEGKNKFNTYVVSFDYPSSYSSVFLRLRSLMYDMNFSSIVADEYGIPRQLNENSFAITTSLAASEIEDLIRLKCLDLPDIDFDLNIMTVDDYFRQFYK.

In terms of assembly, monomer. Post-translationally, unlike other TA antitoxins, this protein is stable.

Its function is as follows. Antitoxin component of a type V toxin-antitoxin (TA) system. Neutralizes the toxic effects of toxin GhoT by digesting ghoT transcripts in a sequence-specific manner. In concert with GhoT is involved in reducing cell growth during antibacterial stress. The chain is Endoribonuclease antitoxin GhoS from Escherichia coli O157:H7.